The primary structure comprises 407 residues: Patatin-like protein 2 (407 aa).

The region spanning 22-228 (LSIDGGGIRG…AANNPALLAI (207 aa)) is the PNPLA domain. A GXGXXG motif is present at residues 26–31 (GGGIRG). The GXSXG signature appears at 64–68 (GTSTG). The Nucleophile role is filled by S66. Residue D215 is the Proton acceptor of the active site. The DGA/G motif lies at 215–217 (DGG). S398 carries the post-translational modification Phosphoserine.

Belongs to the patatin family. In terms of tissue distribution, expressed specifically in roots.

It localises to the cytoplasm. In terms of biological role, possesses non-specific lipolytic acyl hydrolase (LAH) activity. Catalyzes the hydrolysis of the galactolipids monogalactosyldiacylglycerol (MGDG) and digalactosyldiacylglycerol (DGDG), and less efficiently the phoshpolipids phosphatidylcholine (PC), phosphatidylethanolamine (PE), phosphatidylglycerol (PG), phosphatidic acid (PA), phosphatidylserine (PS) and phosphatidylinositol (PI). Favors the release of fatty acid at the sn-1 position for PC or PE and the sn-2 position for PG, PA, PS and PI. Negatively affects disease resistance to the necrotic fungal pathogen Botrytis cinerea and the avirulent bacteria Pseudomonas syringae by promoting cell death and reducing the efficiency of the hypersensitive response, respectively. However, PLP2 contributes to resistance to cucumber mosaic virus (CMV), an obligate parasite inducing hypersensitive response. May negatively regulate oxylipin production, possibly via participating in membrane repair that includes removal of oxidatively modified lipids. The sequence is that of Patatin-like protein 2 (PLP2) from Arabidopsis thaliana (Mouse-ear cress).